Here is a 248-residue protein sequence, read N- to C-terminus: MSARPKLVVGNWKLHGSLNGNAELLEKIKAAGQTRAALAVCAPFPYLAQCQSVLAGSSVAWGAQDVSAETRGAFTGEVAASMLSEFGCGYAIVGHSERRTYHGETDAQVAIKALRALEHGITPIVCVGETLAQREAGETELVVARQLEAVLESLSVEQLGHIVVAYEPVWAIGTGKTATSEQAQAVHAFLRGRVAACDAGVAQRMPILYGGSVKPDNAAELFTMADIDGGLIGGASLKAEDFLAIGRA.

Residue Asn11–Lys13 participates in substrate binding. The active-site Electrophile is the His95. Glu167 functions as the Proton acceptor in the catalytic mechanism. Substrate is bound by residues Gly173, Ser212, and Gly233 to Gly234.

It belongs to the triosephosphate isomerase family. In terms of assembly, homodimer.

The protein localises to the cytoplasm. The catalysed reaction is D-glyceraldehyde 3-phosphate = dihydroxyacetone phosphate. The protein operates within carbohydrate biosynthesis; gluconeogenesis. Its pathway is carbohydrate degradation; glycolysis; D-glyceraldehyde 3-phosphate from glycerone phosphate: step 1/1. Functionally, involved in the gluconeogenesis. Catalyzes stereospecifically the conversion of dihydroxyacetone phosphate (DHAP) to D-glyceraldehyde-3-phosphate (G3P). The sequence is that of Triosephosphate isomerase from Ralstonia nicotianae (strain ATCC BAA-1114 / GMI1000) (Ralstonia solanacearum).